The primary structure comprises 179 residues: Adenine phosphoribosyltransferase (179 aa).

This sequence belongs to the purine/pyrimidine phosphoribosyltransferase family. In terms of assembly, homodimer.

The protein resides in the cytoplasm. It catalyses the reaction AMP + diphosphate = 5-phospho-alpha-D-ribose 1-diphosphate + adenine. It participates in purine metabolism; AMP biosynthesis via salvage pathway; AMP from adenine: step 1/1. Functionally, catalyzes a salvage reaction resulting in the formation of AMP, that is energically less costly than de novo synthesis. This is Adenine phosphoribosyltransferase from Bradyrhizobium diazoefficiens (strain JCM 10833 / BCRC 13528 / IAM 13628 / NBRC 14792 / USDA 110).